The sequence spans 967 residues: Phosphoenolpyruvate carboxylase 1 (967 aa).

Residue serine 11 is modified to Phosphoserine. Catalysis depends on residues histidine 173 and lysine 602. Serine 704 is modified (phosphoserine).

It belongs to the PEPCase type 1 family. In terms of assembly, homotetramer. The cofactor is Mg(2+). Requires Mn(2+) as cofactor. In terms of processing, the phosphorylation of Ser-11 is reversibly promoted by inorganic phosphate (Pi) deprivation. Enhanced activity by phosphorylation at pH 7.3 by lowering Km and sensitivity to inhibition by L-malate and L-aspartate, while enhancing activation by glucose 6-phosphate. In terms of tissue distribution, expressed in all plant organs, with higher levels in roots.

It localises to the cytoplasm. The enzyme catalyses oxaloacetate + phosphate = phosphoenolpyruvate + hydrogencarbonate. By light-reversible phosphorylation. Activated by inorganic phosphate (Pi) deprivation and glucose 6-phosphate. Inhibited by L-malate and L-aspartate. Its function is as follows. Through the carboxylation of phosphoenolpyruvate (PEP) it forms oxaloacetate, a four-carbon dicarboxylic acid source for the tricarboxylic acid cycle. Contributes probably to the adaptation to inorganic phosphate (Pi) deprivation. This Arabidopsis thaliana (Mouse-ear cress) protein is Phosphoenolpyruvate carboxylase 1 (PPC1).